The following is a 511-amino-acid chain: Lariat debranching enzyme (511 aa).

Residues cysteine 52, histidine 54, aspartate 83, and asparagine 128 each coordinate a divalent metal cation. Positions 168–198 (SGIYSHGDVEFSHYERPAFAERDVKSAYHVR) are lariat recognition loop. A divalent metal cation-binding residues include histidine 226, histidine 278, and histidine 280. Positions 473 to 511 (EDDFIIDRGHGSEEPEAKKSRLEEEKKKKKKKIENLKTL) are disordered. The segment covering 477 to 498 (IIDRGHGSEEPEAKKSRLEEEK) has biased composition (basic and acidic residues).

The protein belongs to the lariat debranching enzyme family. The cofactor is Fe(2+). It depends on Zn(2+) as a cofactor. Mn(2+) is required as a cofactor.

The protein resides in the nucleus. Active in presence of diverse metals including Fe(2+), Zn(2+), Mn(2+). Binds two metal cations in two adjacent alpha and beta metal-binding pockets. In terms of biological role, cleaves the 2'-5' phosphodiester linkage at the branch point of lariat intron pre-mRNAs after splicing and converts them into linear molecules that are subsequently degraded. It thereby facilitates ribonucleotide turnover. The sequence is that of Lariat debranching enzyme (dbr-1) from Caenorhabditis briggsae.